Consider the following 143-residue polypeptide: MGKPNGLKTARKLRNHRRVQRWNDKLYKKAHFGTALKANPFGGASHASGIVVSRLGIEAKQPNSAIRKCVRVQLKKNGKKITAFVPNDGCLNYIQENDKVLVAGLGRSGHSVGDIPGVRFKVVKVSSVSLIAIYRGIKDKPNV.

Hydroxyproline is present on proline 62.

The protein belongs to the universal ribosomal protein uS12 family.

This is Small ribosomal subunit protein uS12 (rps23) from Dictyostelium discoideum (Social amoeba).